Consider the following 277-residue polypeptide: Large ribosomal subunit protein uL2c (277 aa).

The segment covering 1-11 (MNTRSYSTFTP) has biased composition (polar residues). 2 disordered regions span residues 1–47 (MNTR…RNNS) and 254–277 (YSALGKKSRKRNKYSDVSILRRRK).

It belongs to the universal ribosomal protein uL2 family. Part of the 50S ribosomal subunit.

The protein resides in the plastid. It is found in the chloroplast. This chain is Large ribosomal subunit protein uL2c (rpl2), found in Cryptomeria japonica (Japanese cedar).